The sequence spans 427 residues: Histidine--tRNA ligase (427 aa).

The protein belongs to the class-II aminoacyl-tRNA synthetase family. Homodimer.

It is found in the cytoplasm. The catalysed reaction is tRNA(His) + L-histidine + ATP = L-histidyl-tRNA(His) + AMP + diphosphate + H(+). In Lacticaseibacillus casei (strain BL23) (Lactobacillus casei), this protein is Histidine--tRNA ligase.